The primary structure comprises 137 residues: Large-conductance mechanosensitive channel (137 aa).

A run of 2 helical transmembrane segments spans residues 9-29 and 79-99; these read AFAV…GAAF and IQTI…VKAI.

The protein belongs to the MscL family. Homopentamer.

The protein resides in the cell inner membrane. In terms of biological role, channel that opens in response to stretch forces in the membrane lipid bilayer. May participate in the regulation of osmotic pressure changes within the cell. This Pseudomonas aeruginosa (strain UCBPP-PA14) protein is Large-conductance mechanosensitive channel.